A 386-amino-acid chain; its full sequence is O-methyltransferase 12 (386 aa).

Residues Ser207, Gly231, Asp254, Asp274, and Lys288 each coordinate S-adenosyl-L-homocysteine. Asp254 is a binding site for S-adenosyl-L-methionine. His292 (proton acceptor) is an active-site residue.

The protein belongs to the class I-like SAM-binding methyltransferase superfamily. Cation-independent O-methyltransferase family. In terms of assembly, homodimer. As to expression, expressed at high levels in all tissues.

It catalyses the reaction 4-hydroxy-3,5-dimethoxyphenethylamine + S-adenosyl-L-methionine = mescaline + S-adenosyl-L-homocysteine + H(+). It carries out the reaction dopamine + S-adenosyl-L-methionine = 4-methoxytyramine + S-adenosyl-L-homocysteine + H(+). The protein operates within aromatic compound metabolism. Its pathway is alkaloid biosynthesis. O-methyltransferase participating in the biosynthesis of natural products derived from phenylethylamine, including mescaline, a natural hallucinogen potentially used in psychotherapeutic treatments. Catalyzes the O-methylation of dopamine, 4-hydroxy-3,5-dimethoxyphenethylamine, 4,5-dihydroxy-3-methoxyphenethylamine and N-methyl-4,5-dihydroxy-3-methoxyphenethylamine. Also involved in the conversion of N-methyl-4-hydroxy-3,5-dimethoxyphenethylamine to N-methylmescaline. The polypeptide is O-methyltransferase 12 (Lophophora williamsii (Peyote)).